A 138-amino-acid polypeptide reads, in one-letter code: Outer membrane protein assembly factor BamE (138 aa).

The signal sequence occupies residues 1–42 (MSHLTMIKTLNLRPFHSASALRKIVITSILGVAVTMSGCSLL).

Belongs to the BamE family. In terms of assembly, part of the Bam complex.

The protein resides in the cell outer membrane. Part of the outer membrane protein assembly complex, which is involved in assembly and insertion of beta-barrel proteins into the outer membrane. The sequence is that of Outer membrane protein assembly factor BamE from Psychrobacter arcticus (strain DSM 17307 / VKM B-2377 / 273-4).